The sequence spans 103 residues: MIKSELVQIVAARNPHLYHRDVENIVNAVLDEITDALAAGNRVELRGFGAFSVKNRPSRSGRNPRTGDSVFVEEKWVPFFKTGKELRERLNPGMNGNDNGEDD.

This sequence belongs to the bacterial histone-like protein family. In terms of assembly, heterodimer of an alpha and a beta chain.

This protein is one of the two subunits of integration host factor, a specific DNA-binding protein that functions in genetic recombination as well as in transcriptional and translational control. This is Integration host factor subunit beta from Sinorhizobium medicae (strain WSM419) (Ensifer medicae).